The sequence spans 104 residues: MSKVTNVSINTKLDELLKGDQVIINFGAEWCGACKVLEPIFNKLSTQYPLVTFLKVEIDKINVHESTKSITSIPTIMLYQKGKKTKEIVSPNETQLRKILDSMK.

The region spanning 2-104 (SKVTNVSINT…QLRKILDSMK (103 aa)) is the Thioredoxin domain. Catalysis depends on nucleophile residues Cys-31 and Cys-34. A disulfide bridge connects residues Cys-31 and Cys-34.

This sequence belongs to the thioredoxin family.

Functionally, participates in various redox reactions through the reversible oxidation of its active center dithiol to a disulfide and catalyzes dithiol-disulfide exchange reactions. The chain is Putative thioredoxin-4 (trxD) from Dictyostelium discoideum (Social amoeba).